The sequence spans 429 residues: Ribosomal RNA small subunit methyltransferase B (429 aa).

Residues 254–260 (CAAPGGK), Asp277, Asp303, and Asp322 contribute to the S-adenosyl-L-methionine site. Cys375 serves as the catalytic Nucleophile.

The protein belongs to the class I-like SAM-binding methyltransferase superfamily. RsmB/NOP family.

The protein resides in the cytoplasm. The enzyme catalyses cytidine(967) in 16S rRNA + S-adenosyl-L-methionine = 5-methylcytidine(967) in 16S rRNA + S-adenosyl-L-homocysteine + H(+). Specifically methylates the cytosine at position 967 (m5C967) of 16S rRNA. The sequence is that of Ribosomal RNA small subunit methyltransferase B from Escherichia coli O6:H1 (strain CFT073 / ATCC 700928 / UPEC).